A 341-amino-acid chain; its full sequence is N-acetyl-gamma-glutamyl-phosphate reductase (341 aa).

Cysteine 145 is a catalytic residue.

The protein belongs to the NAGSA dehydrogenase family. Type 1 subfamily.

The protein localises to the cytoplasm. It catalyses the reaction N-acetyl-L-glutamate 5-semialdehyde + phosphate + NADP(+) = N-acetyl-L-glutamyl 5-phosphate + NADPH + H(+). It functions in the pathway amino-acid biosynthesis; L-arginine biosynthesis; N(2)-acetyl-L-ornithine from L-glutamate: step 3/4. Its function is as follows. Catalyzes the NADPH-dependent reduction of N-acetyl-5-glutamyl phosphate to yield N-acetyl-L-glutamate 5-semialdehyde. The protein is N-acetyl-gamma-glutamyl-phosphate reductase of Streptomyces clavuligerus.